Consider the following 217-residue polypeptide: Small ribosomal subunit protein uS3 (217 aa).

Positions 38-106 (IRKFIQKELA…QVHINIVEIK (69 aa)) constitute a KH type-2 domain.

Belongs to the universal ribosomal protein uS3 family. As to quaternary structure, part of the 30S ribosomal subunit. Forms a tight complex with proteins S10 and S14.

Its function is as follows. Binds the lower part of the 30S subunit head. Binds mRNA in the 70S ribosome, positioning it for translation. The polypeptide is Small ribosomal subunit protein uS3 (Streptococcus thermophilus (strain CNRZ 1066)).